We begin with the raw amino-acid sequence, 647 residues long: Chaperone protein DnaK (647 aa).

The residue at position 198 (Thr198) is a Phosphothreonine; by autocatalysis. A disordered region spans residues 603 to 647 (EQAQGAGGAQGFDPNAFQGGDAGQQQKADDGVVDAEFTEVKDDKK). Positions 618–628 (AFQGGDAGQQQ) are enriched in low complexity.

It belongs to the heat shock protein 70 family.

Functionally, acts as a chaperone. This is Chaperone protein DnaK from Acinetobacter baylyi (strain ATCC 33305 / BD413 / ADP1).